Here is a 236-residue protein sequence, read N- to C-terminus: Purine nucleoside phosphorylase DeoD-type (236 aa).

Histidine 5 provides a ligand contact to a purine D-ribonucleoside. Residues glycine 21, arginine 25, arginine 44, and 88-91 (RVGT) each bind phosphate. A purine D-ribonucleoside-binding positions include 180-182 (EME) and 204-205 (SD). Aspartate 205 (proton donor) is an active-site residue.

This sequence belongs to the PNP/UDP phosphorylase family. In terms of assembly, homohexamer; trimer of homodimers.

It catalyses the reaction a purine D-ribonucleoside + phosphate = a purine nucleobase + alpha-D-ribose 1-phosphate. It carries out the reaction a purine 2'-deoxy-D-ribonucleoside + phosphate = a purine nucleobase + 2-deoxy-alpha-D-ribose 1-phosphate. Functionally, catalyzes the reversible phosphorolytic breakdown of the N-glycosidic bond in the beta-(deoxy)ribonucleoside molecules, with the formation of the corresponding free purine bases and pentose-1-phosphate. The polypeptide is Purine nucleoside phosphorylase DeoD-type (Shewanella baltica (strain OS223)).